The chain runs to 1000 residues: Chloride channel protein D (1000 aa).

Composition is skewed to low complexity over residues 1–16 (MSSGNPFDNGNPNDGN) and 38–60 (NNNNNNNNNNNNNNNNNNNNSSV). A disordered region spans residues 1–90 (MSSGNPFDNG…SYDDDGDDEE (90 aa)). Topologically, residues 1–256 (MSSGNPFDNG…LASDHEVLRW (256 aa)) are cytoplasmic. Residues 71–80 (RIQEEERLTE) are compositionally biased toward basic and acidic residues. A run of 10 helical transmembrane segments spans residues 257-277 (IVSLFMGIFIGVIAYFSHACV), 290-310 (AVLELDLFLAFLTYFLLNTLL), 416-436 (GAGAGVAAAFSAPLGGTLFSL), 442-462 (FWSIALTWRAFFCCMVATYTM), 493-513 (IIPFLLIGVLGGLGGALFTWI), 534-554 (LEVFLIIGLSTCIQFFLPLFF), 678-698 (LGLWPMFLFCIFYLFFAAYTA), 710-730 (MLVIGASYGRFVGLVVYHILG), 733-753 (VSIDPGIYAVMGAAAFMGGVS), and 772-792 (YLLPLMLTVMTAKWVADALIH). 2 consecutive CBS domains span residues 824–881 (MAKK…ISDV) and 926–984 (MNLT…YREL).

The protein belongs to the chloride channel (TC 2.A.49) family.

It localises to the membrane. In terms of biological role, voltage-gated chloride channel. Chloride channels may have several functions including the regulation of cell volume, membrane potential stabilization and signal transduction. Required for normal aggregation. The protein is Chloride channel protein D (clcD) of Dictyostelium discoideum (Social amoeba).